Here is a 60-residue protein sequence, read N- to C-terminus: Short neurotoxin 1 (60 aa).

4 disulfides stabilise this stretch: cysteine 3-cysteine 22, cysteine 17-cysteine 39, cysteine 41-cysteine 52, and cysteine 53-cysteine 58.

The protein belongs to the three-finger toxin family. Short-chain subfamily. Type I alpha-neurotoxin sub-subfamily. As to expression, expressed by the venom gland.

The protein resides in the secreted. In terms of biological role, binds to muscle nicotinic acetylcholine receptor (nAChR) and inhibit acetylcholine from binding to the receptor, thereby impairing neuromuscular transmission. The recombinant protein also barely blocks voltage-gated potassium channel Kv1.3/KCNA3 (2.71% inhibition at 60 nM of toxin). The sequence is that of Short neurotoxin 1 from Hydrophis lapemoides (Persian gulf sea snake).